The following is a 360-amino-acid chain: NAD(P)H-quinone oxidoreductase subunit 1, chloroplastic (360 aa).

8 helical membrane passes run 27 to 47 (IWIF…VLVI), 98 to 118 (FSIG…VIPF), 129 to 149 (IGIF…LMSG), 165 to 185 (AAQS…ISLL), 203 to 223 (FWGW…ISSL), 253 to 273 (FGLF…FVTV), 297 to 317 (IFGT…FLFV), and 340 to 360 (FLLP…LFSL).

This sequence belongs to the complex I subunit 1 family. In terms of assembly, NDH is composed of at least 16 different subunits, 5 of which are encoded in the nucleus.

It localises to the plastid. Its subcellular location is the chloroplast thylakoid membrane. The enzyme catalyses a plastoquinone + NADH + (n+1) H(+)(in) = a plastoquinol + NAD(+) + n H(+)(out). It catalyses the reaction a plastoquinone + NADPH + (n+1) H(+)(in) = a plastoquinol + NADP(+) + n H(+)(out). Its function is as follows. NDH shuttles electrons from NAD(P)H:plastoquinone, via FMN and iron-sulfur (Fe-S) centers, to quinones in the photosynthetic chain and possibly in a chloroplast respiratory chain. The immediate electron acceptor for the enzyme in this species is believed to be plastoquinone. Couples the redox reaction to proton translocation, and thus conserves the redox energy in a proton gradient. This chain is NAD(P)H-quinone oxidoreductase subunit 1, chloroplastic, found in Arabidopsis thaliana (Mouse-ear cress).